We begin with the raw amino-acid sequence, 554 residues long: (S)-1-hydroxy-N-methylcanadine 13-hydroxylase CYP82X2 (554 aa).

The chain crosses the membrane as a helical span at residues 23-43 (IISTFIVTIISIVFLYTVLLI). Cysteine 494 provides a ligand contact to heme.

The protein belongs to the cytochrome P450 family. Requires heme as cofactor. Highly expressed in capsules. Expressed is stems.

The protein localises to the membrane. It carries out the reaction (S)-1-hydroxy-N-methylcanadine + reduced [NADPH--hemoprotein reductase] + O2 = (13S,14R)-1,13-dihydroxy-N-methylcanadine + oxidized [NADPH--hemoprotein reductase] + H2O + H(+). The protein operates within alkaloid biosynthesis. Its function is as follows. Cytochrome P450 involved in the biosynthesis of the benzylisoquinoline alkaloid noscapine. Converts (S)-1-hydroxy-N-methylcanadine to (13S,14R)-1,13-dihydroxy-N-methylcanadine. The sequence is that of (S)-1-hydroxy-N-methylcanadine 13-hydroxylase CYP82X2 from Papaver somniferum (Opium poppy).